The chain runs to 471 residues: Putative multidrug resistance protein MdtD (471 aa).

Topologically, residues 1 to 11 are periplasmic; it reads MTELPDSTRWQ. A helical transmembrane segment spans residues 12–32; sequence LWIVAFGFFMQSLDTTIVNTA. Topologically, residues 33–48 are cytoplasmic; sequence LPSMAQSLGESPLHMH. A helical transmembrane segment spans residues 49-69; it reads MVIVSYVLTVAVMLPASGWLA. At 70–76 the chain is on the periplasmic side; it reads DKVGVRN. A helical membrane pass occupies residues 77 to 97; sequence IFFTAIVLFTLGSLFCALSGT. Residues 98 to 101 are Cytoplasmic-facing; that stretch reads LNEL. Residues 102 to 124 form a helical membrane-spanning segment; sequence LLARALQGVGGAMMVPVGRLTVM. At 125–137 the chain is on the periplasmic side; that stretch reads KIVPREQYMAAMT. The chain crosses the membrane as a helical span at residues 138–158; it reads FVTLPGQVGPLLGPALGGLLV. Over 159-164 the chain is Cytoplasmic; sequence EYASWH. A helical transmembrane segment spans residues 165–185; the sequence is WIFLINIPVGIIGAIATLLLM. At 186–196 the chain is on the periplasmic side; sequence PNYTMQTRRFD. The helical transmembrane segment at 197 to 217 threads the bilayer; the sequence is LSGFLLLAVGMAVLTLALDGS. The Cytoplasmic segment spans residues 218 to 224; the sequence is KGTGLSP. A helical membrane pass occupies residues 225 to 245; it reads LAIAGLVAVGVVALVLYLLHA. Residues 246 to 262 lie on the Periplasmic side of the membrane; the sequence is RNNNRALFSLKLFRTRT. Residues 263 to 283 traverse the membrane as a helical segment; the sequence is FSLGLAGSFAGRIGSGMLPFM. Over 284 to 285 the chain is Cytoplasmic; it reads TP. Residues 286-306 traverse the membrane as a helical segment; sequence VFLQIGLGFSPFHAGLMMIPM. The Periplasmic segment spans residues 307 to 341; that stretch reads VLGSMGMKRIVVQVVNRFGYRRVLVATTLGLSLIT. A helical membrane pass occupies residues 342–362; that stretch reads LLFMTTALLGWYYVLPFVLFL. Residues 363–395 lie on the Cytoplasmic side of the membrane; sequence QGMVNSTRFSSMNTLTLKDLPDNLASSGNSLLS. Residues 396–416 form a helical membrane-spanning segment; the sequence is MIMQLSMSIGVTIAGLLLGLF. Over 417–430 the chain is Periplasmic; that stretch reads GSQHVSVDSGTTQT. Residues 431-451 form a helical membrane-spanning segment; sequence VFMYTWLSMAFIIALPAFIFA. Residues 452–471 lie on the Cytoplasmic side of the membrane; it reads RVPNDTHQNVAISRRKRSAQ.

The protein belongs to the major facilitator superfamily. TCR/Tet family.

It localises to the cell inner membrane. This is Putative multidrug resistance protein MdtD from Shigella sonnei (strain Ss046).